A 420-amino-acid chain; its full sequence is Glucose-1-phosphate adenylyltransferase (420 aa).

Alpha-D-glucose 1-phosphate-binding positions include tyrosine 107, glycine 172, 187 to 188, and serine 205; that span reads EK.

This sequence belongs to the bacterial/plant glucose-1-phosphate adenylyltransferase family. In terms of assembly, homotetramer.

It catalyses the reaction alpha-D-glucose 1-phosphate + ATP + H(+) = ADP-alpha-D-glucose + diphosphate. It participates in glycan biosynthesis; glycogen biosynthesis. Its function is as follows. Involved in the biosynthesis of ADP-glucose, a building block required for the elongation reactions to produce glycogen. Catalyzes the reaction between ATP and alpha-D-glucose 1-phosphate (G1P) to produce pyrophosphate and ADP-Glc. The sequence is that of Glucose-1-phosphate adenylyltransferase from Rhizobium etli (strain CIAT 652).